The primary structure comprises 155 residues: Cell division protein SepF (155 aa).

Over residues arginine 22–glutamine 46 the composition is skewed to basic and acidic residues. Residues arginine 22–glutamine 54 are disordered.

This sequence belongs to the SepF family. As to quaternary structure, homodimer. Interacts with FtsZ.

The protein localises to the cytoplasm. In terms of biological role, cell division protein that is part of the divisome complex and is recruited early to the Z-ring. Probably stimulates Z-ring formation, perhaps through the cross-linking of FtsZ protofilaments. Its function overlaps with FtsA. The protein is Cell division protein SepF of Shouchella clausii (strain KSM-K16) (Alkalihalobacillus clausii).